The primary structure comprises 286 residues: Cytochrome c oxidase subunit 3 (286 aa).

8 helical membrane-spanning segments follow: residues 13 to 33 (GVFLFLSYTPLYITYLLGVVI), 40 to 60 (VGTFAITLDIILCILVVCFLI), 85 to 105 (IIQYCFLWFVFSEFMLFVVFF), 133 to 153 (IILDLGYIFYWFLFDFFNIIL), 173 to 195 (LCREYLLSKIILGSSIFLGLLFI), 199 to 221 (VWEFNILIITLSVNIFCTILFSI), 223 to 243 (TLHFMHVLVGIVFMIISIFNI), and 253 to 273 (IVLIVCIIFYWHFVDIVWFFL).

This sequence belongs to the cytochrome c oxidase subunit 3 family. In terms of assembly, component of the cytochrome c oxidase (complex IV, CIV), a multisubunit enzyme composed of a catalytic core of 3 subunits and several supernumerary subunits. The complex exists as a monomer or a dimer and forms supercomplexes (SCs) in the inner mitochondrial membrane with ubiquinol-cytochrome c oxidoreductase (cytochrome b-c1 complex, complex III, CIII).

It localises to the mitochondrion inner membrane. The catalysed reaction is 4 Fe(II)-[cytochrome c] + O2 + 8 H(+)(in) = 4 Fe(III)-[cytochrome c] + 2 H2O + 4 H(+)(out). Its function is as follows. Component of the cytochrome c oxidase, the last enzyme in the mitochondrial electron transport chain which drives oxidative phosphorylation. The respiratory chain contains 3 multisubunit complexes succinate dehydrogenase (complex II, CII), ubiquinol-cytochrome c oxidoreductase (cytochrome b-c1 complex, complex III, CIII) and cytochrome c oxidase (complex IV, CIV), that cooperate to transfer electrons derived from NADH and succinate to molecular oxygen, creating an electrochemical gradient over the inner membrane that drives transmembrane transport and the ATP synthase. Cytochrome c oxidase is the component of the respiratory chain that catalyzes the reduction of oxygen to water. Electrons originating from reduced cytochrome c in the intermembrane space (IMS) are transferred via the dinuclear copper A center (CU(A)) of subunit 2 and heme A of subunit 1 to the active site in subunit 1, a binuclear center (BNC) formed by heme A3 and copper B (CU(B)). The BNC reduces molecular oxygen to 2 water molecules using 4 electrons from cytochrome c in the IMS and 4 protons from the mitochondrial matrix. The polypeptide is Cytochrome c oxidase subunit 3 (COIII) (Trypanoplasma borreli).